Here is a 183-residue protein sequence, read N- to C-terminus: Large ribosomal subunit protein bL27m (183 aa).

Residues 1 to 34 (MFLRPTSIPSAVSQIRAQLFAGPSSLASQIQVRW) constitute a mitochondrion transit peptide.

It belongs to the bacterial ribosomal protein bL27 family.

It localises to the mitochondrion. In Cryptococcus neoformans var. neoformans serotype D (strain B-3501A) (Filobasidiella neoformans), this protein is Large ribosomal subunit protein bL27m (RPL27).